A 715-amino-acid chain; its full sequence is ATP-dependent zinc metalloprotease FtsH (715 aa).

The Cytoplasmic segment spans residues 1-10; the sequence is MKNKNRGFFR. The chain crosses the membrane as a helical span at residues 11–31; it reads SSLSYAFVILAVIFLIYSFFG. Residues 32-137 are Extracellular-facing; it reads RSDGSVKHLS…KPAASNFWGS (106 aa). The chain crosses the membrane as a helical span at residues 138–158; sequence MLTLILPTLIMFALLYWMLIG. Residues 159 to 715 are Cytoplasmic-facing; that stretch reads SQRGQGGSGG…LLDAVNNKFD (557 aa). The disordered stretch occupies residues 167–187; sequence GGPGGIMSFGRSKAKPADPKQ. 233–240 contributes to the ATP binding site; the sequence is GPPGTGKT. Zn(2+) is bound at residue His-455. Glu-456 is a catalytic residue. Residues His-459 and Asp-531 each contribute to the Zn(2+) site.

The protein in the central section; belongs to the AAA ATPase family. It in the C-terminal section; belongs to the peptidase M41 family. As to quaternary structure, homohexamer. The cofactor is Zn(2+).

It localises to the cell membrane. Functionally, acts as a processive, ATP-dependent zinc metallopeptidase for both cytoplasmic and membrane proteins. Plays a role in the quality control of integral membrane proteins. Its function is as follows. Can complement an E.coli ftsH disruption mutant. The chain is ATP-dependent zinc metalloprotease FtsH from Oenococcus oeni (Leuconostoc oenos).